A 164-amino-acid polypeptide reads, in one-letter code: NADH-quinone oxidoreductase subunit I (164 aa).

4Fe-4S ferredoxin-type domains are found at residues 55–85 (LRRYPNGEERCIACKLCEAICPAQAITIDAE) and 95–124 (TRYDIDMTKCIYCGFCQEACPVDAIVEGPN). [4Fe-4S] cluster is bound by residues Cys-65, Cys-68, Cys-71, Cys-75, Cys-104, Cys-107, Cys-110, and Cys-114.

Belongs to the complex I 23 kDa subunit family. As to quaternary structure, NDH-1 is composed of 14 different subunits. Subunits NuoA, H, J, K, L, M, N constitute the membrane sector of the complex. [4Fe-4S] cluster is required as a cofactor.

It localises to the cell inner membrane. The enzyme catalyses a quinone + NADH + 5 H(+)(in) = a quinol + NAD(+) + 4 H(+)(out). NDH-1 shuttles electrons from NADH, via FMN and iron-sulfur (Fe-S) centers, to quinones in the respiratory chain. The immediate electron acceptor for the enzyme in this species is believed to be ubiquinone. Couples the redox reaction to proton translocation (for every two electrons transferred, four hydrogen ions are translocated across the cytoplasmic membrane), and thus conserves the redox energy in a proton gradient. This Ruegeria pomeroyi (strain ATCC 700808 / DSM 15171 / DSS-3) (Silicibacter pomeroyi) protein is NADH-quinone oxidoreductase subunit I.